Reading from the N-terminus, the 115-residue chain is Anamorsin homolog 1 (115 aa).

The interval Val-30–Ile-115 is disordered. The [2Fe-2S] cluster site is built by Cys-39, Cys-46, Cys-49, and Cys-51. The interval Cys-39 to Cys-51 is fe-S binding site A. 4 residues coordinate [4Fe-4S] cluster: Cys-77, Cys-80, Cys-88, and Cys-91. 2 short sequence motifs (cx2C motif) span residues Cys-77 to Cys-80 and Cys-88 to Cys-91. The interval Cys-77–Cys-91 is fe-S binding site B.

Belongs to the anamorsin family. In terms of assembly, monomer. [2Fe-2S] cluster is required as a cofactor. It depends on [4Fe-4S] cluster as a cofactor.

It is found in the cytoplasm. Its subcellular location is the mitochondrion intermembrane space. Component of the cytosolic iron-sulfur (Fe-S) protein assembly (CIA) machinery. Required for the maturation of extramitochondrial Fe-S proteins. Part of an electron transfer chain functioning in an early step of cytosolic Fe-S biogenesis, facilitating the de novo assembly of a [4Fe-4S] cluster on the cytosolic Fe-S scaffold complex. Electrons are transferred from NADPH via a FAD- and FMN-containing diflavin oxidoreductase. Together with the diflavin oxidoreductase, also required for the assembly of the diferric tyrosyl radical cofactor of ribonucleotide reductase (RNR), probably by providing electrons for reduction during radical cofactor maturation in the catalytic small subunit. The protein is Anamorsin homolog 1 of Trypanosoma cruzi (strain CL Brener).